The primary structure comprises 319 residues: Chromoplast-specific carotenoid-associated protein C2, chromoplastic (319 aa).

The transit peptide at M1 to R55 directs the protein to the chromoplast.

The protein belongs to the PAP/fibrillin family.

The protein localises to the plastid. It is found in the chromoplast. May be involved in carotenoid sequestration within chromoplasts. The chain is Chromoplast-specific carotenoid-associated protein C2, chromoplastic (CHRC2) from Oncidium hybrid cultivar (Orchid).